Consider the following 701-residue polypeptide: Glycine--tRNA ligase beta subunit (701 aa).

This sequence belongs to the class-II aminoacyl-tRNA synthetase family. In terms of assembly, tetramer of two alpha and two beta subunits.

The protein resides in the cytoplasm. It carries out the reaction tRNA(Gly) + glycine + ATP = glycyl-tRNA(Gly) + AMP + diphosphate. This chain is Glycine--tRNA ligase beta subunit, found in Helicobacter pylori (strain G27).